Reading from the N-terminus, the 627-residue chain is Ski protein homolog (627 aa).

A compositionally biased stretch (polar residues) spans 1–12 (MSDSPIGSSQQV). Disordered regions lie at residues 1-22 (MSDS…PDLM), 34-58 (LHEE…KDSR), and 299-318 (EYDE…METP).

Belongs to the SKI family. May interact with daf-3. In terms of tissue distribution, expressed in ganglia in the head and tail and in the anterior pharynx.

It localises to the nucleus. Functionally, probable component of transcriptional regulatory complex with SMAD protein daf-3. Required to regulate entry into a developmentally arrested larval state known as dauer, in response to harsh environmental conditions. Involved in larvae undergoing cell-cycle arrest during the dauer stage. The sequence is that of Ski protein homolog from Caenorhabditis elegans.